We begin with the raw amino-acid sequence, 159 residues long: Dynein 18 kDa light chain, flagellar outer arm (159 aa).

3 consecutive EF-hand domains span residues 18 to 53 (EEMD…LGQN), 54 to 89 (PTEE…NKQM), and 129 to 159 (ELTV…ALLS). Residues Asp-31, Asp-33, Ser-35, Thr-37, Glu-42, Asp-67, Asp-69, Ser-71, Cys-73, and Glu-78 each coordinate Ca(2+).

In terms of assembly, consists of at least 3 heavy chains (alpha, beta and gamma), 2 intermediate chains and 8 light chains.

The protein resides in the cell projection. Its subcellular location is the cilium. It localises to the flagellum. In terms of biological role, may be involved in the calcium-mediated regulation of dynein motor function. Binds 1 mole of calcium. The sequence is that of Dynein 18 kDa light chain, flagellar outer arm from Chlamydomonas reinhardtii (Chlamydomonas smithii).